A 672-amino-acid chain; its full sequence is Glycogen [starch] synthase (672 aa).

K56 lines the UDP-alpha-D-glucose pocket. Residues 645 to 672 (MRDNEGKVPSAATSRRPSIHSSDGEDDE) form a disordered region. The segment covering 655-665 (AATSRRPSIHS) has biased composition (polar residues).

It belongs to the glycosyltransferase 3 family. Forms a hetero-octamer with each protomer of the gsy-1 homotetramer bound to one molecule of gyg-1. The N-terminus is involved in interprotomer contacts with gyg-1. The interaction with gyg-1 is required for glycogen production but is not required for gsy-1 intrinsic activity.

It catalyses the reaction [(1-&gt;4)-alpha-D-glucosyl](n) + UDP-alpha-D-glucose = [(1-&gt;4)-alpha-D-glucosyl](n+1) + UDP + H(+). It participates in glycan biosynthesis; glycogen biosynthesis. Its function is as follows. Transfers the glycosyl residue from UDP-Glc to the non-reducing end of alpha-1,4-glucan. This is Glycogen [starch] synthase from Caenorhabditis elegans.